We begin with the raw amino-acid sequence, 518 residues long: AarF domain-containing kinase 1 (518 aa).

The region spanning serine 149–alanine 468 is the Protein kinase domain. Residues leucine 155 to valine 163 and lysine 177 contribute to the ATP site. Aspartate 309 acts as the Proton acceptor in catalysis.

The protein belongs to the protein kinase superfamily. ADCK protein kinase family.

The protein resides in the mitochondrion. In terms of biological role, essential for maintaining mitochondrial cristae formation and mitochondrial function by acting via YME1L to regulate the mitochondrial structural proteins Opa1 and Mitofilin. This function is likely to be kinase-independent. Functions in tracheal development and larval molting probably by acting in sterol modification and/or intracellular lipid trafficking. The action of this enzyme is not yet clear. It is not known if it has protein kinase activity and what type of substrate it would phosphorylate (Ser, Thr or Tyr). This is AarF domain-containing kinase 1 from Drosophila melanogaster (Fruit fly).